Here is a 135-residue protein sequence, read N- to C-terminus: MPTINQLVRKGRHSKVTKSKSPALNYSYNSMKKESVFNPAPQMRGVATRVGTMTPKKPNSALRKYARVRLSNLIEVTAYIPGEGHNLQEHSVVLIRGGRVKDLPGVRYHIVRGALDTAGVEGRKQSRSKYGTKKD.

The interval 1 to 20 (MPTINQLVRKGRHSKVTKSK) is disordered. Over residues 9 to 18 (RKGRHSKVTK) the composition is skewed to basic residues.

This sequence belongs to the universal ribosomal protein uS12 family. As to quaternary structure, part of the 30S ribosomal subunit. Contacts proteins S8 and S17. May interact with IF1 in the 30S initiation complex.

Functionally, with S4 and S5 plays an important role in translational accuracy. In terms of biological role, interacts with and stabilizes bases of the 16S rRNA that are involved in tRNA selection in the A site and with the mRNA backbone. Located at the interface of the 30S and 50S subunits, it traverses the body of the 30S subunit contacting proteins on the other side and probably holding the rRNA structure together. The combined cluster of proteins S8, S12 and S17 appears to hold together the shoulder and platform of the 30S subunit. This chain is Small ribosomal subunit protein uS12, found in Lactobacillus acidophilus (strain ATCC 700396 / NCK56 / N2 / NCFM).